A 460-amino-acid polypeptide reads, in one-letter code: MLKVLIPTIMLFPTIWLTSPKWLWTTTTAHSLLIASISLMWFKWTSETGWTSSNTYLATDPLSTPLLVLTCWLLPLMILASQNHINPEPISRQRLYITLLASLQTFLIMAFGATEIIMFYIMFEATLIPTLIIITRWGNQTERLNAGTYFLFYTLAGSLPLLVALLLLQQSTGTLSMLVLQYSQPLQLNSWGHMIWWAACLIAFLVKMPLYGVHLWLPKAHVEAPVAGSMVLAAVLLKLGGYGMMRMMVMLDPLSKELAYPFIILALWGIIMTGSICLRQTDLKSLIAYSSVSHMGLVAGGILIQTPWGFSGAIILMIAHGLVSSALFCLANTAYERTHSRTMILARGLQIIFPLTAVWWFIANLANLALPPLPNLMGELMIITTLFNWSPWTILLTGLGTLITAGYSLYMFLMSQRGPTPNHITGLQPFHTREHLLMTLHLIPVILLVTKPELMWGWCY.

12 consecutive transmembrane segments (helical) span residues 20 to 42, 61 to 81, 93 to 113, 114 to 134, 148 to 168, 195 to 215, 225 to 245, 258 to 278, 285 to 304, 308 to 330, 351 to 371, and 394 to 414; these read PKWLWTTTTAHSLLIASISLMWF, PLSTPLLVLTCWLLPLMILAS, QRLYITLLASLQTFLIMAFGA, TEIIMFYIMFEATLIPTLIII, TYFLFYTLAGSLPLLVALLLL, IWWAACLIAFLVKMPLYGVHL, PVAGSMVLAAVLLKLGGYGMM, LAYPFIILALWGIIMTGSICL, SLIAYSSVSHMGLVAGGILI, WGFSGAIILMIAHGLVSSALFCL, IIFPLTAVWWFIANLANLALP, and ILLTGLGTLITAGYSLYMFLM.

This sequence belongs to the complex I subunit 4 family.

Its subcellular location is the mitochondrion membrane. It catalyses the reaction a ubiquinone + NADH + 5 H(+)(in) = a ubiquinol + NAD(+) + 4 H(+)(out). In terms of biological role, core subunit of the mitochondrial membrane respiratory chain NADH dehydrogenase (Complex I) that is believed to belong to the minimal assembly required for catalysis. Complex I functions in the transfer of electrons from NADH to the respiratory chain. The immediate electron acceptor for the enzyme is believed to be ubiquinone. This chain is NADH-ubiquinone oxidoreductase chain 4 (MT-ND4), found in Carassius auratus (Goldfish).